A 545-amino-acid chain; its full sequence is MSISAQNPDISGDRQSGQDVRTQNVMACQAVSNIVKTSLGPVGLDKMLVDDIGDVTITNDGATILRMLEVEHPAAKVLVELAELQDREVGDGTTSVVIVAAELLKRANDLVRNKIHPTSIISGYRLAMRESCKYIEEKLVTKVEKLGKVPLINCAKTSMSSKLISGDSDFFANLVVEAVLSVKMTNQRGEIKYPIKGINILKAHGQSARDSYLLNGYALNTGRAAQGMPLRVSPAKIACLDFNLQKTKMQLGVQVVVNDPRELEKIRQREADMTKERIEKLLKAGANVILTTKGIDDMALKYFVEAGAIAVRRVRKEDMRHVAKATGATLVTTFADMEGEETFDPAHLGSADEVVEERIADDDVILIKGTKTSSAVSLILRGANDYMLDEMERALHDALCIVKRTLESNTVVAGGGAVESALSVYLEHLATTLGSREQLAIAEFADALLIIPKVLAVNAAKDATELVAKLRAYHHTAQTKADKKHYSSMGLDLVNGTIRNNLEAGVIEPAMSKVKIIQFATEAAITILRIDDMIKLVKDESQGEE.

At Ser2 the chain carries N-acetylserine.

It belongs to the TCP-1 chaperonin family. In terms of assembly, heterooligomeric complex of about 850 to 900 kDa that forms two stacked rings, 12 to 16 nm in diameter.

It localises to the cytoplasm. Molecular chaperone; assists the folding of proteins upon ATP hydrolysis. Known to play a role, in vitro, in the folding of actin and tubulin. The sequence is that of T-complex protein 1 subunit alpha from Arabidopsis thaliana (Mouse-ear cress).